A 491-amino-acid polypeptide reads, in one-letter code: Chromosomal replication initiator protein DnaA (491 aa).

The segment at 1–68 (MTSIWGQIQH…RTAACGVIGD (68 aa)) is domain I, interacts with DnaA modulators. The interval 68-146 (DTVEVVVTAG…PLDWAPVPQS (79 aa)) is domain II. The domain III, AAA+ region stretch occupies residues 147–364 (RTNWRFSFDD…SCLHNLILKA (218 aa)). ATP-binding residues include G190, G192, K193, and T194. A domain IV, binds dsDNA region spans residues 365–491 (KLLNRQISLE…RNGRITHARH (127 aa)).

It belongs to the DnaA family. In terms of assembly, oligomerizes as a right-handed, spiral filament on DNA at oriC.

It is found in the cytoplasm. Functionally, plays an essential role in the initiation and regulation of chromosomal replication. ATP-DnaA binds to the origin of replication (oriC) to initiate formation of the DNA replication initiation complex once per cell cycle. Binds the DnaA box (a 9 base pair repeat at the origin) and separates the double-stranded (ds)DNA. Forms a right-handed helical filament on oriC DNA; dsDNA binds to the exterior of the filament while single-stranded (ss)DNA is stabiized in the filament's interior. The ATP-DnaA-oriC complex binds and stabilizes one strand of the AT-rich DNA unwinding element (DUE), permitting loading of DNA polymerase. After initiation quickly degrades to an ADP-DnaA complex that is not apt for DNA replication. Binds acidic phospholipids. The sequence is that of Chromosomal replication initiator protein DnaA from Nitratidesulfovibrio vulgaris (strain ATCC 29579 / DSM 644 / CCUG 34227 / NCIMB 8303 / VKM B-1760 / Hildenborough) (Desulfovibrio vulgaris).